Consider the following 219-residue polypeptide: Cytochrome c biogenesis ATP-binding export protein CcmA (219 aa).

The ABC transporter domain occupies isoleucine 10–valine 218. Glycine 42–threonine 49 is a binding site for ATP.

This sequence belongs to the ABC transporter superfamily. CcmA exporter (TC 3.A.1.107) family. The complex is composed of two ATP-binding proteins (CcmA) and two transmembrane proteins (CcmB).

It is found in the cell inner membrane. It catalyses the reaction heme b(in) + ATP + H2O = heme b(out) + ADP + phosphate + H(+). Its function is as follows. Part of the ABC transporter complex CcmAB involved in the biogenesis of c-type cytochromes; once thought to export heme, this seems not to be the case, but its exact role is uncertain. Responsible for energy coupling to the transport system. The polypeptide is Cytochrome c biogenesis ATP-binding export protein CcmA (Colwellia psychrerythraea (strain 34H / ATCC BAA-681) (Vibrio psychroerythus)).